Here is a 200-residue protein sequence, read N- to C-terminus: Dephospho-CoA kinase (200 aa).

One can recognise a DPCK domain in the interval 3 to 200; it reads VLGLTGSIGM…LSGKPAAATR (198 aa). 11–16 is an ATP binding site; it reads GMGKTT.

The protein belongs to the CoaE family.

It localises to the cytoplasm. It carries out the reaction 3'-dephospho-CoA + ATP = ADP + CoA + H(+). The protein operates within cofactor biosynthesis; coenzyme A biosynthesis; CoA from (R)-pantothenate: step 5/5. In terms of biological role, catalyzes the phosphorylation of the 3'-hydroxyl group of dephosphocoenzyme A to form coenzyme A. The protein is Dephospho-CoA kinase of Brucella melitensis biotype 1 (strain ATCC 23456 / CCUG 17765 / NCTC 10094 / 16M).